The primary structure comprises 338 residues: Methionyl-tRNA formyltransferase (338 aa).

110-113 (SLLP) is a (6S)-5,6,7,8-tetrahydrofolate binding site.

This sequence belongs to the Fmt family.

The catalysed reaction is L-methionyl-tRNA(fMet) + (6R)-10-formyltetrahydrofolate = N-formyl-L-methionyl-tRNA(fMet) + (6S)-5,6,7,8-tetrahydrofolate + H(+). Attaches a formyl group to the free amino group of methionyl-tRNA(fMet). The formyl group appears to play a dual role in the initiator identity of N-formylmethionyl-tRNA by promoting its recognition by IF2 and preventing the misappropriation of this tRNA by the elongation apparatus. The chain is Methionyl-tRNA formyltransferase from Synechococcus sp. (strain CC9605).